The following is a 1098-amino-acid chain: Transcription elongation regulator 1 (1098 aa).

Basic and acidic residues predominate over residues 1–15; that stretch reads MAERGGDGGESERFN. Residues 1-105 are disordered; it reads MAERGGDGGE…RPPFMPPPMS (105 aa). Position 11 is a phosphoserine (serine 11). Position 20 is an omega-N-methylarginine (arginine 20). An asymmetric dimethylarginine mark is found at arginine 28, arginine 30, arginine 41, and arginine 48. The segment covering 32-105 has biased composition (pro residues); that stretch reads PAPPPNAVMR…RPPFMPPPMS (74 aa). Positions 131–164 constitute a WW 1 domain; sequence PPTEEIWVENKTPDGKVYYYNARTRESAWTKPDG. The stretch at 184 to 244 forms a coiled coil; it reads QAQAQAQAQA…AQAQAQAQVQ (61 aa). The span at 259–333 shows a compositional bias: low complexity; that stretch reads STPTTSSPAP…PTATPVQTVP (75 aa). Residues 259–348 form a disordered region; it reads STPTTSSPAP…TLPPAVPHSV (90 aa). Residues 334 to 344 are compositionally biased toward pro residues; that stretch reads QPHPQTLPPAV. A WW 2 domain is found at 429 to 462; the sequence is ATAVSEWTEYKTADGKTYYYNNRTLESTWEKPQE. 2 stretches are compositionally biased toward basic and acidic residues: residues 469–481 and 496–506; these read LEEK…KEPS and EEPIKEIKEEP. The segment at 469 to 526 is disordered; that stretch reads LEEKIKEPIKEPSEEPLPMETEEEDPKEEPIKEIKEEPKEEEMTEEEKAAQKAKPVAT. Glycyl lysine isopeptide (Lys-Gly) (interchain with G-Cter in SUMO2) cross-links involve residues lysine 503 and lysine 507. The region spanning 528-561 is the WW 3 domain; the sequence is PIPGTPWCVVWTGDERVFFYNPTTRLSMWDRPDD. The stretch at 606–655 forms a coiled coil; that stretch reads AIKEEQELMEEINEDEPVKAKKRKRDDNKDIDSEKEAAMEAEIKAARERA. Lysine 608 participates in a covalent cross-link: Glycyl lysine isopeptide (Lys-Gly) (interchain with G-Cter in SUMO2). Positions 615–640 are disordered; sequence EEINEDEPVKAKKRKRDDNKDIDSEK. A Nuclear localization signal motif is present at residues 626-630; it reads KKRKR. Residues 630 to 640 are compositionally biased toward basic and acidic residues; the sequence is RDDNKDIDSEK. Position 638 is a phosphoserine (serine 638). 3 consecutive FF domains span residues 659 to 712, 725 to 779, and 791 to 846; these read LEAR…YVKT, IMQA…FVAA, and RGEK…YIEK. Serine 834 carries the post-translational modification Phosphoserine. Residues 844–906 adopt a coiled-coil conformation; sequence IEKIAKNLDS…EEAIQNFKAL (63 aa). The interval 870–895 is disordered; it reads REREREVQKARSEQTKEIDREREQHK. 3 consecutive FF domains span residues 896–952, 954–1010, and 1012–1077; these read REEA…HIEA, TKKK…YIRD, and YITA…YVDD. The residue at position 933 (serine 933) is a Phosphoserine. A disordered region spans residues 1076–1098; sequence DDLDRRGPPPPPTASEPTRRSTK.

As to quaternary structure, binds formin. Interacts (via the second WW domain) with TREX1 (via proline-rich region). Binds RNA polymerase II, HD and SF1. In terms of tissue distribution, detected in brain neurons.

The protein resides in the nucleus. In terms of biological role, transcription factor that binds RNA polymerase II and inhibits the elongation of transcripts from target promoters. Regulates transcription elongation in a TATA box-dependent manner. Necessary for TAT-dependent activation of the human immunodeficiency virus type 1 (HIV-1) promoter. The sequence is that of Transcription elongation regulator 1 (TCERG1) from Homo sapiens (Human).